Reading from the N-terminus, the 154-residue chain is 6,7-dimethyl-8-ribityllumazine synthase (154 aa).

Residues Phe-26, 60 to 62, and 84 to 86 contribute to the 5-amino-6-(D-ribitylamino)uracil site; these read ALE and CII. 89–90 serves as a coordination point for (2S)-2-hydroxy-3-oxobutyl phosphate; the sequence is ET. His-92 acts as the Proton donor in catalysis. Asn-117 contributes to the 5-amino-6-(D-ribitylamino)uracil binding site. Residue Arg-131 participates in (2S)-2-hydroxy-3-oxobutyl phosphate binding.

This sequence belongs to the DMRL synthase family.

The enzyme catalyses (2S)-2-hydroxy-3-oxobutyl phosphate + 5-amino-6-(D-ribitylamino)uracil = 6,7-dimethyl-8-(1-D-ribityl)lumazine + phosphate + 2 H2O + H(+). It functions in the pathway cofactor biosynthesis; riboflavin biosynthesis; riboflavin from 2-hydroxy-3-oxobutyl phosphate and 5-amino-6-(D-ribitylamino)uracil: step 1/2. Its function is as follows. Catalyzes the formation of 6,7-dimethyl-8-ribityllumazine by condensation of 5-amino-6-(D-ribitylamino)uracil with 3,4-dihydroxy-2-butanone 4-phosphate. This is the penultimate step in the biosynthesis of riboflavin. The protein is 6,7-dimethyl-8-ribityllumazine synthase of Paracidovorax citrulli (strain AAC00-1) (Acidovorax citrulli).